Consider the following 524-residue polypeptide: Lysophospholipid acyltransferase LPCAT4 (524 aa).

The next 2 helical transmembrane spans lie at 40 to 62 (CLLG…FLLW) and 87 to 107 (TVCH…LGFL). Positions 129–134 (HSTFFD) match the HXXXXD motif motif. A glycan (N-linked (GlcNAc...) asparagine) is linked at Asn-152. The disordered stretch occupies residues 489–524 (PPHTSRGTSQTPNASSPGNPTALANGTVQAPKQKGD). Residues 493–518 (SRGTSQTPNASSPGNPTALANGTVQA) are compositionally biased toward polar residues.

This sequence belongs to the 1-acyl-sn-glycerol-3-phosphate acyltransferase family. As to expression, widely expressed with predominant level in brain.

Its subcellular location is the endoplasmic reticulum membrane. The enzyme catalyses a 1-acyl-sn-glycero-3-phosphoethanolamine + an acyl-CoA = a 1,2-diacyl-sn-glycero-3-phosphoethanolamine + CoA. It carries out the reaction a 1-O-(1Z-alkenyl)-sn-glycero-3-phosphoethanolamine + an acyl-CoA = a 1-O-(1Z-alkenyl)-2-acyl-sn-glycero-3-phosphoethanolamine + CoA. It catalyses the reaction a 1-acyl-sn-glycero-3-phosphocholine + an acyl-CoA = a 1,2-diacyl-sn-glycero-3-phosphocholine + CoA. The catalysed reaction is a 1-O-alkyl-sn-glycero-3-phosphocholine + acetyl-CoA = a 1-O-alkyl-2-acetyl-sn-glycero-3-phosphocholine + CoA. The enzyme catalyses a 1-acyl-sn-glycero-3-phospho-L-serine + an acyl-CoA = a 1,2-diacyl-sn-glycero-3-phospho-L-serine + CoA. It carries out the reaction octanoyl-CoA + a 1-acyl-sn-glycero-3-phosphoethanolamine = 1-acyl-2-octanoyl-sn-glycero-3-phosphoethanolamine + CoA. It catalyses the reaction a 1-acyl-sn-glycero-3-phosphoethanolamine + hexadecanoyl-CoA = 1-acyl-2-hexadecanoyl-sn-glycero-3-phosphoethanolamine + CoA. The catalysed reaction is a 1-acyl-sn-glycero-3-phosphoethanolamine + octadecanoyl-CoA = 1-acyl-2-octadecanoyl-sn-glycero-3-phosphoethanolamine + CoA. The enzyme catalyses a 1-acyl-sn-glycero-3-phosphoethanolamine + (9Z)-octadecenoyl-CoA = 1-acyl-2-(9Z)-octadecenoyl-sn-glycero-3-phosphoethanolamine + CoA. It carries out the reaction a 1-acyl-sn-glycero-3-phosphoethanolamine + (5Z,8Z,11Z,14Z)-eicosatetraenoyl-CoA = 1-acyl-2-(5Z,8Z,11Z,14Z)-eicosatetraenoyl-sn-glycero-3-phosphoethanolamine + CoA. It catalyses the reaction a 1-O-(1Z-alkenyl)-sn-glycero-3-phosphoethanolamine + octanoyl-CoA = 1-O-(1Z)-alkenyl-2-octanoyl-sn-glycero-3-phosphoethanolamine + CoA. The catalysed reaction is a 1-O-(1Z-alkenyl)-sn-glycero-3-phosphoethanolamine + hexadecanoyl-CoA = 1-O-(1Z)-alkenyl-2-hexadecanoyl-sn-glycero-3-phosphoethanolamine + CoA. The enzyme catalyses a 1-O-(1Z-alkenyl)-sn-glycero-3-phosphoethanolamine + octadecanoyl-CoA = 1-O-(1Z)-alkenyl-2-octadecanoyl-sn-glycero-3-phosphoethanolamine + CoA. It carries out the reaction a 1-O-(1Z-alkenyl)-sn-glycero-3-phosphoethanolamine + (9Z)-octadecenoyl-CoA = 1-O-(1Z)-alkenyl-2-(9Z)-octadecenoyl-sn-glycero-3-phosphoethanolamine + CoA. It catalyses the reaction a 1-O-(1Z-alkenyl)-sn-glycero-3-phosphoethanolamine + (5Z,8Z,11Z,14Z)-eicosatetraenoyl-CoA = 1-O-(1Z)-alkenyl-2-(5Z,8Z,11Z,14Z)-eicosatetraenoyl-sn-glycero-3-phosphoethanolamine + CoA. The catalysed reaction is a 1-acyl-sn-glycero-3-phosphocholine + hexadecanoyl-CoA = 1-acyl-2-hexadecanoyl-sn-glycero-3-phosphocholine + CoA. The enzyme catalyses a 1-acyl-sn-glycero-3-phosphocholine + (9Z)-octadecenoyl-CoA = a 1-acyl-2-(9Z)-octadecenoyl-sn-glycero-3-phosphocholine + CoA. It carries out the reaction 1-O-hexadecyl-sn-glycero-3-phosphocholine + (9Z)-octadecenoyl-CoA = 1-O-hexadecyl-2-(9Z)-octadecenoyl-sn-glycero-3-phosphocholine + CoA. It catalyses the reaction 1-O-hexadecyl-sn-glycero-3-phosphocholine + (5Z,8Z,11Z,14Z)-eicosatetraenoyl-CoA = 1-O-hexadecyl-2-(5Z,8Z,11Z,14Z)-eicosatetraenoyl-sn-glycero-3-phosphocholine + CoA. The catalysed reaction is 1-hexadecanoyl-sn-glycero-3-phospho-L-serine + (9Z)-octadecenoyl-CoA = 1-hexadecanoyl-2-(9Z-octadecenoyl)-sn-glycero-3-phospho-L-serine + CoA. The enzyme catalyses 1-octadecanoyl-sn-glycero-3-phospho-(1'-sn-glycerol) + (9Z)-octadecenoyl-CoA = 1-octadecanoyl-2-(9Z-octadecenoyl)-sn-glycero-3-phospho-(1'-sn-glycerol) + CoA. It carries out the reaction 1-octadecanoyl-sn-glycero-3-phospho-(1'-sn-glycerol) + (5Z,8Z,11Z,14Z)-eicosatetraenoyl-CoA = 1-octadecanoyl-2-(5Z,8Z,11Z,14Z-eicosatetraenoyl)-sn-glycero-3-phospho-(1'-sn-glycerol) + CoA. It participates in lipid metabolism; phospholipid metabolism. Functionally, displays acyl-CoA-dependent lysophospholipid acyltransferase activity with a subset of lysophospholipids as substrates; converts lysophosphatidylethanolamine to phosphatidylethanolamine, lysophosphatidylcholine to phosphatidycholine, 1-alkenyl-lysophatidylethanolamine to 1-alkenyl-phosphatidylethanolamine, lysophosphatidylglycerol and alkyl-lysophosphatidylcholine to phosphatidylglycerol and alkyl-phosphatidylcholine, respectively. In contrast, has no lysophosphatidylinositol, glycerol-3-phosphate, diacylglycerol or lysophosphatidic acid acyltransferase activity. Prefers long chain acyl-CoAs (C16, C18) as acyl donors. This is Lysophospholipid acyltransferase LPCAT4 (LPCAT4) from Homo sapiens (Human).